We begin with the raw amino-acid sequence, 327 residues long: Phenylalanine--tRNA ligase alpha subunit (327 aa).

Residue glutamate 252 participates in Mg(2+) binding.

Belongs to the class-II aminoacyl-tRNA synthetase family. Phe-tRNA synthetase alpha subunit type 1 subfamily. Tetramer of two alpha and two beta subunits. The cofactor is Mg(2+).

It is found in the cytoplasm. It carries out the reaction tRNA(Phe) + L-phenylalanine + ATP = L-phenylalanyl-tRNA(Phe) + AMP + diphosphate + H(+). This Shewanella baltica (strain OS185) protein is Phenylalanine--tRNA ligase alpha subunit.